Consider the following 382-residue polypeptide: Quinolinate synthase (382 aa).

Iminosuccinate-binding residues include His63 and Ser84. A [4Fe-4S] cluster-binding site is contributed by Cys129. Iminosuccinate is bound by residues 155–157 and Ser172; that span reads YAN. Position 216 (Cys216) interacts with [4Fe-4S] cluster. Residues 242–244 and Thr259 contribute to the iminosuccinate site; that span reads HPE. Residue Cys313 participates in [4Fe-4S] cluster binding.

This sequence belongs to the quinolinate synthase family. Type 1 subfamily. [4Fe-4S] cluster is required as a cofactor.

The protein resides in the cytoplasm. It carries out the reaction iminosuccinate + dihydroxyacetone phosphate = quinolinate + phosphate + 2 H2O + H(+). Its pathway is cofactor biosynthesis; NAD(+) biosynthesis; quinolinate from iminoaspartate: step 1/1. Functionally, catalyzes the condensation of iminoaspartate with dihydroxyacetone phosphate to form quinolinate. This is Quinolinate synthase from Ralstonia pickettii (strain 12J).